Consider the following 245-residue polypeptide: Putative outer membrane protein RBE_0022 (245 aa).

The signal sequence occupies residues Met1 to Ala23.

The protein belongs to the OmpW/AlkL family.

It is found in the cell outer membrane. The polypeptide is Putative outer membrane protein RBE_0022 (Rickettsia bellii (strain RML369-C)).